The primary structure comprises 82 residues: Small ribosomal subunit protein uS17 (82 aa).

This sequence belongs to the universal ribosomal protein uS17 family. As to quaternary structure, part of the 30S ribosomal subunit.

One of the primary rRNA binding proteins, it binds specifically to the 5'-end of 16S ribosomal RNA. This Pelobacter propionicus (strain DSM 2379 / NBRC 103807 / OttBd1) protein is Small ribosomal subunit protein uS17.